The chain runs to 136 residues: MANLTKLKIVTPYAQILEKDVYSVELKTSEGRITVLPDHNPLMSTIENHVAYIRELPNTPRKPLLLLDGIVYIEQHQVRVFSDYFKFLDEIQIDEINSSLNQLKHDLNNEEDDKKKLQLKSKIKLNESILIAYKDR.

Belongs to the ATPase epsilon chain family. F-type ATPases have 2 components, CF(1) - the catalytic core - and CF(0) - the membrane proton channel. CF(1) has five subunits: alpha(3), beta(3), gamma(1), delta(1), epsilon(1). CF(0) has three main subunits: a, b and c.

It is found in the cell membrane. Produces ATP from ADP in the presence of a proton gradient across the membrane. In Ureaplasma parvum serovar 3 (strain ATCC 27815 / 27 / NCTC 11736), this protein is ATP synthase epsilon chain.